The following is a 293-amino-acid chain: Diaminopimelate epimerase (293 aa).

Substrate is bound by residues Asn13, Gln46, and Asn66. The active-site Proton donor is the Cys75. Residues 76-77, Asn162, Asn195, and 213-214 each bind substrate; these read GN and ER. Cys222 (proton acceptor) is an active-site residue. Residue 223-224 participates in substrate binding; the sequence is GT.

It belongs to the diaminopimelate epimerase family. In terms of assembly, homodimer.

The protein resides in the cytoplasm. The catalysed reaction is (2S,6S)-2,6-diaminopimelate = meso-2,6-diaminopimelate. The protein operates within amino-acid biosynthesis; L-lysine biosynthesis via DAP pathway; DL-2,6-diaminopimelate from LL-2,6-diaminopimelate: step 1/1. Catalyzes the stereoinversion of LL-2,6-diaminopimelate (L,L-DAP) to meso-diaminopimelate (meso-DAP), a precursor of L-lysine and an essential component of the bacterial peptidoglycan. This is Diaminopimelate epimerase from Psychrobacter sp. (strain PRwf-1).